We begin with the raw amino-acid sequence, 65 residues long: Large ribosomal subunit protein bL35 (65 aa).

The tract at residues 1–26 is disordered; it reads MPKIKTVRGAAKRFKKTASGGFKRKQ. A compositionally biased stretch (basic residues) spans 10–26; sequence AAKRFKKTASGGFKRKQ.

Belongs to the bacterial ribosomal protein bL35 family.

This Haemophilus ducreyi (strain 35000HP / ATCC 700724) protein is Large ribosomal subunit protein bL35.